Consider the following 269-residue polypeptide: Enoyl-[acyl-carrier-protein] reductase [NADH] (269 aa).

NAD(+) is bound by residues 20–21 (SI), 64–65 (DV), and 95–96 (IG). A substrate-binding site is contributed by tyrosine 158. NAD(+) is bound by residues lysine 165 and isoleucine 194.

The protein belongs to the short-chain dehydrogenases/reductases (SDR) family. FabI subfamily. In terms of assembly, homodimer. Homotetramer.

The catalysed reaction is a 2,3-saturated acyl-[ACP] + NAD(+) = a (2E)-enoyl-[ACP] + NADH + H(+). It carries out the reaction a 2,3-saturated acyl-CoA + NAD(+) = a (2E)-enoyl-CoA + NADH + H(+). Its pathway is lipid metabolism; mycolic acid biosynthesis. Functionally, enoyl-ACP reductase of the type II fatty acid syntase (FAS-II) system, which is involved in the biosynthesis of mycolic acids, a major component of mycobacterial cell walls. Catalyzes the NADH-dependent reduction of the double bond of 2-trans-enoyl-[acyl-carrier protein], an essential step in the fatty acid elongation cycle of the FAS-II pathway. Shows preference for long-chain fatty acyl thioester substrates, and can also use 2-trans-enoyl-CoAs as alternative substrates. The mycobacterial FAS-II system utilizes the products of the FAS-I system as primers to extend fatty acyl chain lengths up to C56, forming the meromycolate chain that serves as the precursor for final mycolic acids. In terms of biological role, is the primary target of the first-line antitubercular drug isoniazid (INH) and of the second-line drug ethionamide (ETH). Overexpressed inhA confers INH and ETH resistance to M.bovis. The mechanism of isoniazid action against InhA is covalent attachment of the activated form of the drug to the nicotinamide ring of NAD and binding of the INH-NAD adduct to the active site of InhA. Similarly, the ETH-NAD adduct binds InhA. In Mycobacterium bovis (strain ATCC BAA-935 / AF2122/97), this protein is Enoyl-[acyl-carrier-protein] reductase [NADH].